A 512-amino-acid chain; its full sequence is Cytochrome P450 monooxygenase cheE (512 aa).

Residues 5 to 27 (YFAAESSWSPYVILVLALAAMVA) traverse the membrane as a helical segment. 3 N-linked (GlcNAc...) asparagine glycosylation sites follow: asparagine 53, asparagine 124, and asparagine 168. Cysteine 455 lines the heme pocket. N-linked (GlcNAc...) asparagine glycans are attached at residues asparagine 499 and asparagine 508.

This sequence belongs to the cytochrome P450 family. The cofactor is heme.

It is found in the membrane. Its pathway is secondary metabolite biosynthesis. Cytochrome P450 monooxygenase; part of the gene cluster that mediates the biosynthesis of chaetoglobosin A which has a unique inhibitory activity against actin polymerization in mammalian cells. Chaetoglobosin A and its intermediates are involved in the morphological differentiation of C.globosum. The first step of the pathway is the synthesis of prochaetoglobosin I via condensation of one acetyl-CoA, 8 malonyl-CoA, and a L-tryptophan molecule by the PKS-NRPS hybrid synthetase cheA, followed by reduction of backbone double bond to install desired geometry by the enoyl reductase cheB. Further multiple oxidation steps performed by the cytochrome P450 monooxygenases cheE and cheG, as well as by the FAD-linked oxidoreductase cheF, lead to the formation of chaetoglobosin A. Depending on the order of action of these reductases, distinct intermediates can be identified. Within the pathway, the cytochrome P450 monooxygenase cheE catalyzes a stereospecific epoxidation on prochaetoglobosin I, cytoglobosin D, and chaetoglobosin J intermediates. The FAD-linked oxidoreductase cheF performs dehydrogenation of the C-20 hydroxyl groups in the 20-dihyrochaetoglobosin A and cytoglobosin D intermediates. Finally, the cytochrome P450 monooxygenase cheG can catalyze the stereospecific dihydroxylation of prochaetoglobosin I and prochaetoglobosin IV at C-19 and C-20, respectively. The Diels-Alderase cheD may play a role in the post-PKS-NRPS biosynthetic steps catalyzing Diels-Alder cyclization. This is Cytochrome P450 monooxygenase cheE from Chaetomium globosum (strain ATCC 6205 / CBS 148.51 / DSM 1962 / NBRC 6347 / NRRL 1970) (Soil fungus).